The following is a 205-amino-acid chain: Recombination protein RecR (205 aa).

The segment at 59–74 (CARCNTFCEGGLCDIC) adopts a C4-type zinc-finger fold. In terms of domain architecture, Toprim spans 82–177 (RRLMVVHMPA…KVSRLSQGIP (96 aa)).

The protein belongs to the RecR family.

May play a role in DNA repair. It seems to be involved in an RecBC-independent recombinational process of DNA repair. It may act with RecF and RecO. This chain is Recombination protein RecR, found in Neisseria meningitidis serogroup A / serotype 4A (strain DSM 15465 / Z2491).